The following is a 473-amino-acid chain: Iron transporter SMF3 (473 aa).

A run of 2 helical transmembrane segments spans residues 14-34 and 44-64; these read FIGP…YATS and TLLF…CLCV. The N-linked (GlcNAc...) asparagine glycan is linked to Asn-87. A run of 9 helical transmembrane segments spans residues 97–117, 119–139, 152–172, 198–218, 257–277, 297–317, 352–372, 373–393, and 448–468; these read AIIA…QILF, IPLT…LMFY, FEFG…LELF, ALYI…LYLG, LIIS…IVAG, LLVH…MLCS, LIAI…GISD, ILNF…APLI, and VFVW…YLLG.

It belongs to the NRAMP family.

The protein resides in the vacuole membrane. Its subcellular location is the endoplasmic reticulum membrane. Its function is as follows. Has a role in controlling the cellular iron ion levels. Mobilizes vacuolar stores of iron in conditions of low iron levels. The protein is Iron transporter SMF3 (SMF3) of Saccharomyces cerevisiae (strain ATCC 204508 / S288c) (Baker's yeast).